The following is a 530-amino-acid chain: Netrin-G2 (530 aa).

An N-terminal signal peptide occupies residues Met-1 to Gly-17. Disulfide bonds link Cys-22-Cys-39, Cys-61-Cys-81, and Cys-69-Cys-77. Residues Glu-35–Arg-286 form the Laminin N-terminal domain. The interval Cys-69 to Leu-88 is NGL discriminant loop I. N-linked (GlcNAc...) asparagine glycosylation is found at Asn-122 and Asn-128. Cys-171 and Cys-195 are joined by a disulfide. The tract at residues Arg-201 to Ala-203 is NGL discriminant loop II. The tract at residues Thr-264–Gln-267 is NGL discriminant loop III. 15 disulfides stabilise this stretch: Cys-287–Cys-296, Cys-289–Cys-305, Cys-307–Cys-316, Cys-319–Cys-344, Cys-353–Cys-362, Cys-355–Cys-373, Cys-376–Cys-385, Cys-388–Cys-406, Cys-409–Cys-421, Cys-411–Cys-427, Cys-429–Cys-438, Cys-441–Cys-451, Cys-456–Cys-469, Cys-463–Cys-475, and Cys-477–Cys-486. 3 consecutive Laminin EGF-like domains span residues Cys-287–Thr-346, Cys-353–Glu-408, and Cys-409–Pro-453. N-linked (GlcNAc...) asparagine glycosylation occurs at Asn-310. Asn-395 carries an N-linked (GlcNAc...) asparagine glycan. N-linked (GlcNAc...) asparagine glycosylation is present at Asn-422. Gly-507 is lipidated: GPI-anchor amidated glycine. Positions Ala-508–Arg-530 are cleaved as a propeptide — removed in mature form.

In terms of assembly, interacts with LRRC4. N-glycosylated.

It localises to the cell membrane. Its function is as follows. Involved in controlling patterning and neuronal circuit formation at the laminar, cellular, subcellular and synaptic levels. Promotes neurite outgrowth of both axons and dendrites. The sequence is that of Netrin-G2 from Homo sapiens (Human).